The sequence spans 84 residues: Large ribosomal subunit protein bL27 (84 aa).

The protein belongs to the bacterial ribosomal protein bL27 family.

This chain is Large ribosomal subunit protein bL27, found in Karelsulcia muelleri (strain GWSS) (Sulcia muelleri).